Here is a 506-residue protein sequence, read N- to C-terminus: ATP-dependent rRNA helicase RRP3 (506 aa).

2 disordered regions span residues 1–22 (MSGKVDKKKGSSVKKTEGKSKE) and 37–88 (NQKK…FESF). Over residues 49 to 69 (SDQEDDPSESEEEEGSDSEDV) the composition is skewed to acidic residues. The Q motif motif lies at 86–114 (ESFSDLDLVPELIEACKNLNFAKPTPIQA). One can recognise a Helicase ATP-binding domain in the interval 117 to 289 (IPPALQGHDI…RASLTNPVKC (173 aa)). An ATP-binding site is contributed by 130–137 (AQTGSGKT). The DEAD box signature appears at 236–239 (DEAD). The region spanning 312–460 (LKNTYLIYLM…KENVNKDAIL (149 aa)) is the Helicase C-terminal domain. Residues 485 to 506 (IARGKGRRGRMAARDDMDKGER) are disordered. Residues 496–506 (AARDDMDKGER) are compositionally biased toward basic and acidic residues.

Belongs to the DEAD box helicase family. DDX47/RRP3 subfamily. Interacts with the SSU processome.

Its subcellular location is the nucleus. It catalyses the reaction ATP + H2O = ADP + phosphate + H(+). Its function is as follows. ATP-dependent rRNA helicase required for pre-ribosomal RNA processing. Involved in the maturation of the 35S-pre-rRNA and to its cleavage to mature 18S rRNA. In Vanderwaltozyma polyspora (strain ATCC 22028 / DSM 70294 / BCRC 21397 / CBS 2163 / NBRC 10782 / NRRL Y-8283 / UCD 57-17) (Kluyveromyces polysporus), this protein is ATP-dependent rRNA helicase RRP3.